Here is a 415-residue protein sequence, read N- to C-terminus: Glutamyl-tRNA reductase (415 aa).

Substrate-binding positions include 49-52, serine 104, 109-111, and glutamine 115; these read TCNR and EPQ. Cysteine 50 (nucleophile) is an active-site residue. 184 to 189 lines the NADP(+) pocket; it reads GAGEMI.

The protein belongs to the glutamyl-tRNA reductase family. Homodimer.

The catalysed reaction is (S)-4-amino-5-oxopentanoate + tRNA(Glu) + NADP(+) = L-glutamyl-tRNA(Glu) + NADPH + H(+). The protein operates within porphyrin-containing compound metabolism; protoporphyrin-IX biosynthesis; 5-aminolevulinate from L-glutamyl-tRNA(Glu): step 1/2. Its function is as follows. Catalyzes the NADPH-dependent reduction of glutamyl-tRNA(Glu) to glutamate 1-semialdehyde (GSA). The protein is Glutamyl-tRNA reductase of Neisseria meningitidis serogroup C (strain 053442).